The primary structure comprises 418 residues: MLHPRARTMLLLSLPAVAIGIASSLILIVVMKIASVLQNLLWLRLPGTLGIAQDSPFWIIAILTLTGIAVGLVIRFSQGHAGPDPACEPLIGAPVPPSALPGLIVALILGLAGGVSLGPEHPIMTVNIALAVAIGARLLPRVNRMEWTILASAGTIGALFGTPVAAALIFSQTLNGSSEVPLWDRLFAPLMAAAAGALTTGLFFHPHFSLPIAHYGQMEMTDILSGAIVAAIAIAAGMIAVWCLPRLHAMMHQIKNPVLMLGVGGFILGILGVIAGPVSLFKGLDEMQQMVANQAFSTSDYFLLAVIKLAALVVAAASGFRGGRIFPAVFVGVALGLMLHEHVPAVPAAITVSCAILGIVLVVTRDGWLSLFMAAVVVPNTTLLPLLCIVMLPAWLLLAGKPMMMVNRPKQQPPHDNV.

Helical transmembrane passes span 10-30 (LLLS…LIVV), 54-74 (DSPF…GLVI), 99-119 (ALPG…SLGP), 120-140 (EHPI…RLLP), 149-169 (ILAS…AALI), 186-206 (LFAP…FFHP), 223-243 (ILSG…AVWC), 258-278 (VLML…AGPV), 300-320 (DYFL…ASGF), 322-342 (GGRI…LHEH), 343-363 (VPAV…VLVV), and 371-391 (LFMA…CIVM).

This sequence belongs to the chloride channel (TC 2.A.49) family.

The protein localises to the cell membrane. This chain is Putative ion-transport protein YfeO, found in Escherichia coli O7:K1 (strain IAI39 / ExPEC).